We begin with the raw amino-acid sequence, 205 residues long: Small ribosomal subunit protein uS4c (205 aa).

The S4 RNA-binding domain occupies methionine 93 to glutamine 154.

Belongs to the universal ribosomal protein uS4 family. In terms of assembly, part of the 30S ribosomal subunit. Contacts protein S5. The interaction surface between S4 and S5 is involved in control of translational fidelity.

Its subcellular location is the plastid. It localises to the chloroplast. Its function is as follows. One of the primary rRNA binding proteins, it binds directly to 16S rRNA where it nucleates assembly of the body of the 30S subunit. With S5 and S12 plays an important role in translational accuracy. The polypeptide is Small ribosomal subunit protein uS4c (rps4) (Chaetosphaeridium globosum (Charophycean green alga)).